A 304-amino-acid chain; its full sequence is Putative S-adenosyl-L-methionine-dependent methyltransferase MUL_0816 (304 aa).

S-adenosyl-L-methionine is bound by residues Asp130 and 159–160 (DL).

Belongs to the UPF0677 family.

Its function is as follows. Exhibits S-adenosyl-L-methionine-dependent methyltransferase activity. This is Putative S-adenosyl-L-methionine-dependent methyltransferase MUL_0816 from Mycobacterium ulcerans (strain Agy99).